A 290-amino-acid chain; its full sequence is Probable porphobilinogen deaminase (290 aa).

Residue cysteine 230 is modified to S-(dipyrrolylmethanemethyl)cysteine.

It belongs to the HMBS family. Requires dipyrromethane as cofactor.

It catalyses the reaction 4 porphobilinogen + H2O = hydroxymethylbilane + 4 NH4(+). Its pathway is porphyrin-containing compound metabolism; protoporphyrin-IX biosynthesis; coproporphyrinogen-III from 5-aminolevulinate: step 2/4. Tetrapolymerization of the monopyrrole PBG into the hydroxymethylbilane pre-uroporphyrinogen in several discrete steps. In Metallosphaera sedula (strain ATCC 51363 / DSM 5348 / JCM 9185 / NBRC 15509 / TH2), this protein is Probable porphobilinogen deaminase.